A 343-amino-acid polypeptide reads, in one-letter code: MDENRKKALSAALGQIERQFGKGAVMRMGDSTAVRDVEAISTGSLALDIALGIGGLPKGRVVEIYGPESSGKTTLTLQVIAECQKQGGTAAFVDAEHALDPGYAEKLGVNVDDLLVSQPDTGEQALEIADMLVRSGAVDVVVVDSVAALTPKAEIEGEMGDAHVGLQARLMSQALRKLTANIKRSNTLVIFINQIRMKIGVMFGNPETTTGGNALKFYASVRLDIRRTGAIKKGDEVIGNETRVKVVKNKVAPPFKQAEFEILYGEGISRLGEVIDIGVQDGIVDKSGAWYSYNGERIGQGKDNARTFLKEHPEMAGEIERQIREKHLPKRSAKADEAESAEA.

Residue 66-73 (GPESSGKT) participates in ATP binding. Residues 319–343 (IERQIREKHLPKRSAKADEAESAEA) are disordered.

Belongs to the RecA family.

It localises to the cytoplasm. Its function is as follows. Can catalyze the hydrolysis of ATP in the presence of single-stranded DNA, the ATP-dependent uptake of single-stranded DNA by duplex DNA, and the ATP-dependent hybridization of homologous single-stranded DNAs. It interacts with LexA causing its activation and leading to its autocatalytic cleavage. This chain is Protein RecA, found in Thioalkalivibrio sulfidiphilus (strain HL-EbGR7).